The sequence spans 176 residues: Tumor necrosis factor receptor superfamily member 23 (176 aa).

A signal peptide spans 1–29 (MVTFSHVSSLSHWFLLLLLLNLFLPVIFA). TNFR-Cys repeat units lie at residues 37 to 72 (NCPDGEYQSNDVCCKTCPSGTFVKAPCKIPHTQGQC), 74 to 114 (KCHP…DRKC), and 115 to 155 (ECQI…NTVC). 9 disulfides stabilise this stretch: cysteine 38/cysteine 49, cysteine 50/cysteine 63, cysteine 53/cysteine 72, cysteine 75/cysteine 90, cysteine 93/cysteine 106, cysteine 96/cysteine 114, cysteine 116/cysteine 131, cysteine 134/cysteine 147, and cysteine 137/cysteine 155. Residue asparagine 148 is glycosylated (N-linked (GlcNAc...) asparagine). Residue cysteine 155 is the site of GPI-anchor amidated cysteine attachment. The propeptide at 156–176 (SSSVSNPRNWLFLLMLIVFCI) is removed in mature form.

As to expression, ubiquitous.

It is found in the cell membrane. Receptor for the cytotoxic ligand TRAIL. Lacks a cytoplasmic death domain and hence is not capable of inducing apoptosis. May protect cells against TRAIL mediated apoptosis through ligand competition. Cannot induce the NF-kappa-B pathway. The polypeptide is Tumor necrosis factor receptor superfamily member 23 (Tnfrsf23) (Mus musculus (Mouse)).